We begin with the raw amino-acid sequence, 276 residues long: METLELQGAKLRYHQVGQGPVLIFIPGANGTGDIFLPLAEQLKDHFTVVAVDRRDYGESELAEPLPDSASNPDSDYRVKRDAQDIAELAKSLSDEPVYILGSSSGSIVAMHVLKDYPEVVKKIAFHEPPINTFLPDSTYWKDKNDDIVHQILTEGLEKGMKTFGETLNIAPIDAKMMSQPADTEEGRIEQYKRTMFWSKFEIRQYTHSDITLDDFTKYSDKITLLNGTDSRGSFPQDVNFYINKETGIPIVDIPGGHLGYIQKPEGFADVLLNMWG.

One can recognise an AB hydrolase-1 domain in the interval 20-137; it reads PVLIFIPGAN…PPINTFLPDS (118 aa).

The protein belongs to the AB hydrolase superfamily.

This is an uncharacterized protein from Staphylococcus aureus (strain MRSA252).